The following is a 112-amino-acid chain: UPF0482 protein SG1468 (112 aa).

The N-terminal stretch at methionine 1 to alanine 22 is a signal peptide.

Belongs to the UPF0482 family.

The protein is UPF0482 protein SG1468 of Sodalis glossinidius (strain morsitans).